We begin with the raw amino-acid sequence, 262 residues long: Glutamate 5-kinase (262 aa).

ATP is bound at residue K14. Substrate contacts are provided by S54, D141, and N153. ATP contacts are provided by residues 173 to 174 and 214 to 220; these read SD and TGGMVTK.

This sequence belongs to the glutamate 5-kinase family.

It localises to the cytoplasm. The enzyme catalyses L-glutamate + ATP = L-glutamyl 5-phosphate + ADP. It functions in the pathway amino-acid biosynthesis; L-proline biosynthesis; L-glutamate 5-semialdehyde from L-glutamate: step 1/2. Functionally, catalyzes the transfer of a phosphate group to glutamate to form L-glutamate 5-phosphate. This Symbiobacterium thermophilum (strain DSM 24528 / JCM 14929 / IAM 14863 / T) protein is Glutamate 5-kinase.